The sequence spans 811 residues: Phenylalanine--tRNA ligase beta subunit (811 aa).

Residues 39–151 enclose the tRNA-binding domain; sequence RTWAAGVVVG…AGLQAGQPVG (113 aa). In terms of domain architecture, B5 spans 409-495; that stretch reads EPEHSITLRL…RLYGYDNFGE (87 aa). Residues D473, D479, E482, and E483 each coordinate Mg(2+). Positions 717–810 constitute an FDX-ACB domain; it reads SSFPASDRDL…LVERFRVTLR (94 aa).

The protein belongs to the phenylalanyl-tRNA synthetase beta subunit family. Type 1 subfamily. In terms of assembly, tetramer of two alpha and two beta subunits. It depends on Mg(2+) as a cofactor.

It is found in the cytoplasm. It carries out the reaction tRNA(Phe) + L-phenylalanine + ATP = L-phenylalanyl-tRNA(Phe) + AMP + diphosphate + H(+). The chain is Phenylalanine--tRNA ligase beta subunit from Synechococcus sp. (strain ATCC 27144 / PCC 6301 / SAUG 1402/1) (Anacystis nidulans).